Reading from the N-terminus, the 281-residue chain is Putative integrase/recombinase y4rD (281 aa).

The 94-residue stretch at 5–98 (LLLAPLLESY…AIRSFFHHVA (94 aa)) folds into the Core-binding (CB) domain. The region spanning 122–281 (EVTHHLTKAE…TMSGTENASV (160 aa)) is the Tyr recombinase domain. Active-site residues include arginine 162, lysine 188, histidine 262, and arginine 265.

Belongs to the 'phage' integrase family.

In terms of biological role, seems to be non-functional. This chain is Putative integrase/recombinase y4rD, found in Sinorhizobium fredii (strain NBRC 101917 / NGR234).